Here is a 273-residue protein sequence, read N- to C-terminus: Large ribosomal subunit protein uL2cz/uL2cy (273 aa).

Disordered regions lie at residues 1–25 and 224–273; these read MAIH…VKSN and NPVD…RRRK.

This sequence belongs to the universal ribosomal protein uL2 family. As to quaternary structure, part of the 50S ribosomal subunit.

The protein resides in the plastid. It is found in the chloroplast. In Phalaenopsis aphrodite subsp. formosana (Moth orchid), this protein is Large ribosomal subunit protein uL2cz/uL2cy (rpl2-A).